The primary structure comprises 342 residues: Succinoglycan biosynthesis protein ExoU (342 aa).

It belongs to the glycosyltransferase 2 family.

The protein localises to the cytoplasm. Its pathway is glycan metabolism; exopolysaccharide biosynthesis. Functionally, glycosyltransferase required for the synthesis of succinoglycan (EPS I). Needed for the addition of the sixth sugar (glucose), catalyzes the formation of a beta-1,6 linkage between the fifth and sixth sugar. In Rhizobium meliloti (strain 1021) (Ensifer meliloti), this protein is Succinoglycan biosynthesis protein ExoU (exoU).